A 109-amino-acid polypeptide reads, in one-letter code: U4-lycotoxin-Ls1a (109 aa).

The signal sequence occupies residues 1 to 22 (MKVLVLFSVLFLTLFSYSSTEA). The propeptide occupies 23–44 (IDEFDSDAEDDMLSLMANEQVR). The segment at 45–88 (AKACTPRLHDCSHDRHSCCRGELFKDVCYCFYPEGEDKTEVCSC) is knottin domain. Disulfide bonds link Cys-48–Cys-63, Cys-55–Cys-72, Cys-62–Cys-88, and Cys-74–Cys-86. The linear cationic cytotoxin domain stretch occupies residues 89–108 (QQPKSHKYIEKVVDKAKTVV).

Belongs to the neurotoxin 19 (CSTX) family. 05 (U4-Lctx) subfamily. As to expression, expressed by the venom gland.

It localises to the secreted. Its function is as follows. Enhances the high-affinity desensitization of human P2RX3 purinoceptors. This is U4-lycotoxin-Ls1a from Lycosa singoriensis (Wolf spider).